A 502-amino-acid polypeptide reads, in one-letter code: Regulator of hypoxia-inducible factor 1 (502 aa).

11 helical membrane-spanning segments follow: residues 54 to 74 (LLAWMTLVVIGTLAPVSVFSC), 92 to 112 (LDVLDIFRFVAILWVMLNHTG), 138 to 158 (IFGALMGNSALGVEIFLVLSG), 188 to 208 (LAPSMFIFVYIAAGPIMNALL), 241 to 261 (MGYLWYLGLDMQLYMVAPIFL), 272 to 292 (MALTITTIIASMVIRAGYCTA), 335 to 355 (GPFLIGLLLGYITVSSKYIMV), 367 to 387 (LIVAIATIYAILPEYWNPNAG), 396 to 416 (TAVFRSVFAMAISGMIAALYF), 437 to 457 (AYLLHMPVVYIFNWLPFLQAA), and 465 to 485 (LVLPFVAILSFIAALIFYLFI).

As to expression, expressed in intestine, some sensory neurons in the head, body wall muscles and socket cells.

It is found in the endoplasmic reticulum membrane. Involved in the response to variation in environmental oxygen levels by inhibiting hif-1-mediated gene transcription in a vhl-1-independent manner. Plays a role in susceptibility to killing mediated by P.aeruginosa and by pore-forming toxins produced by B.thuringiensis. Probably by preventing hif-1 transcriptional activity, regulates behavioral responses, such as locomotion speed following acute reoxygenation. Plays a role in normal egg-laying probably by regulating spermatogenesis and in body morphogenesis. The polypeptide is Regulator of hypoxia-inducible factor 1 (Caenorhabditis elegans).